We begin with the raw amino-acid sequence, 419 residues long: UDP-N-acetylglucosamine 1-carboxyvinyltransferase 2 (419 aa).

22–23 (KN) is a phosphoenolpyruvate binding site. Position 92 (Arg92) interacts with UDP-N-acetyl-alpha-D-glucosamine. The active-site Proton donor is Cys116. Cys116 carries the 2-(S-cysteinyl)pyruvic acid O-phosphothioketal modification. UDP-N-acetyl-alpha-D-glucosamine contacts are provided by residues 121 to 125 (RPIDL), Asp306, and Val328.

The protein belongs to the EPSP synthase family. MurA subfamily.

The protein localises to the cytoplasm. It catalyses the reaction phosphoenolpyruvate + UDP-N-acetyl-alpha-D-glucosamine = UDP-N-acetyl-3-O-(1-carboxyvinyl)-alpha-D-glucosamine + phosphate. The protein operates within cell wall biogenesis; peptidoglycan biosynthesis. In terms of biological role, cell wall formation. Adds enolpyruvyl to UDP-N-acetylglucosamine. The protein is UDP-N-acetylglucosamine 1-carboxyvinyltransferase 2 of Carboxydothermus hydrogenoformans (strain ATCC BAA-161 / DSM 6008 / Z-2901).